A 214-amino-acid chain; its full sequence is Adenylate kinase (214 aa).

Residue 10–15 (GAGKGT) participates in ATP binding. The segment at 30–59 (STGDMLRAAIKAGTELGKQAKSVIDAGQLV) is NMP. Residues T31, R36, 57-59 (QLV), 85-88 (GFPR), and Q92 contribute to the AMP site. Residues 122-159 (GRRAHLPSGRTYHNVYNPPKEEGKDDITGEELVVRDDD) are LID. ATP contacts are provided by residues R123 and 132 to 133 (TY). AMP is bound by residues R156 and R167. K200 contacts ATP.

Belongs to the adenylate kinase family. In terms of assembly, monomer.

Its subcellular location is the cytoplasm. The enzyme catalyses AMP + ATP = 2 ADP. The protein operates within purine metabolism; AMP biosynthesis via salvage pathway; AMP from ADP: step 1/1. Catalyzes the reversible transfer of the terminal phosphate group between ATP and AMP. Plays an important role in cellular energy homeostasis and in adenine nucleotide metabolism. The sequence is that of Adenylate kinase from Vibrio atlanticus (strain LGP32) (Vibrio splendidus (strain Mel32)).